Consider the following 252-residue polypeptide: MSQVSICLLSEAGADPGALSILAERWGLVSDEQSIMALVLTPERLELRKRDEPKLGGIYVDFVAGTLAHRRKFGGGRGEAVAKAVGIKKGYLPRVVDATAGLGRDAFVLAALGCHVQMLERNPVVAALLDDGLRRGYQDAEIGPWLRERLTLLHASSLTALAEIEPRPEVVYLDPMYPHRQKSALVKKEMRVFQSLVGADEDADGLLAPARALATKRVVVKRPDYAEPLAGIAAQAAVTTKSHRFDLYMPLL.

Residues 104–105, 120–121, 156–157, and Asp-174 contribute to the S-adenosyl-L-methionine site; these read RD, ER, and SS.

It belongs to the methyltransferase superfamily. RsmJ family.

Its subcellular location is the cytoplasm. It carries out the reaction guanosine(1516) in 16S rRNA + S-adenosyl-L-methionine = N(2)-methylguanosine(1516) in 16S rRNA + S-adenosyl-L-homocysteine + H(+). Specifically methylates the guanosine in position 1516 of 16S rRNA. The polypeptide is Ribosomal RNA small subunit methyltransferase J (Yersinia enterocolitica serotype O:8 / biotype 1B (strain NCTC 13174 / 8081)).